Consider the following 363-residue polypeptide: uncharacterized protein (363 aa).

29-36 provides a ligand contact to ATP; sequence GSINSGKT.

The protein belongs to the archaeal ATPase family.

This is an uncharacterized protein from Methanocaldococcus jannaschii (strain ATCC 43067 / DSM 2661 / JAL-1 / JCM 10045 / NBRC 100440) (Methanococcus jannaschii).